The following is a 61-amino-acid chain: MAVPKKKTSKSRRDMRRSHHALKPSAYGECPNCGELKRPHHVCTSCGHYDGREVVSEDVAA.

A compositionally biased stretch (basic residues) spans 1-22 (MAVPKKKTSKSRRDMRRSHHAL). The disordered stretch occupies residues 1 to 27 (MAVPKKKTSKSRRDMRRSHHALKPSAY).

Belongs to the bacterial ribosomal protein bL32 family.

This chain is Large ribosomal subunit protein bL32, found in Rhodospirillum rubrum (strain ATCC 11170 / ATH 1.1.1 / DSM 467 / LMG 4362 / NCIMB 8255 / S1).